A 780-amino-acid chain; its full sequence is MAPYRPEFSAAEQSRIDAEFSRLARNKSVYLDHAGTTLYAENQVTAAAEQLQRNVICNPHTCRLTGDFVDQVRFKILEFFNTTAEDYHVIFTANATAALSLVAENFDFGSTGDFHFCQENHTSVLGMRERVRANGIYMLKEKEISGGELKKNGTVHKVSGKTGNSLLTFSAQCNFSGYKIPLDTIEKIQIDGLSKPGKQLWGSLGENKENTHNDYYICLDAASFVATSPLDLKKYRPDYVCLSFYKIFGYPTGVGALLVSRRGADVFQKRRFFGGGTINYAYPHAMDYQLRETFHQRYEDGTLPFLAIVGLLEGFRTLERLVPKTDEFSTMERISRHVFGLAKYLEDQLRQLQHPNGEPLVELYNKVGYQDKSRQGGIVAFNVRTESGSFVGFGEIACVAALHGILLRTGCFCNIGACQYYLNLDEDAMDTIYKRAGRICGDYFDLVDGQPTGAVRVSFGYMTTFQDVEQLLQMLRSSYLATKPLQRIQFIEEQAEQLPPLLKERVQLLRPKLLQMAIYPVKSCAAFKIELEGSWPLTDQGLRYDREWMIVDMNGMALTQKRCTELCLIRPVIKVDQLELQFGDNSHFSVPLSLEDQAADSAKCVSKVCRQPVEGLDCGDGVAQWLSENLGLEGLRLLRQSGQRNSSKDQQKLSLVNQAQFLLLNKSSVRSLQFEEPLDETVDRFRANIIIDTGSAFEELTYKALSIGGIQFQVEGPCQRCDMICINQRTGERSPETLTTISRLQKGRMRFGIYITRIPQDTKELEAKEHMTCGDVVLVE.

K246 is subject to N6-(pyridoxal phosphate)lysine. Residue C413 is part of the active site. One can recognise an MOSC domain in the interval L635–E780. At S734 the chain carries Phosphoserine.

The protein belongs to the class-V pyridoxal-phosphate-dependent aminotransferase family. MOCOS subfamily. It depends on pyridoxal 5'-phosphate as a cofactor.

It carries out the reaction Mo-molybdopterin + L-cysteine + AH2 = thio-Mo-molybdopterin + L-alanine + A + H2O. Its function is as follows. Sulfurates the molybdenum cofactor. Sulfation of molybdenum is essential for xanthine dehydrogenase (XDH) and aldehyde oxidase (ADO) enzymes in which molybdenum cofactor is liganded by 1 oxygen and 1 sulfur atom in active form. The protein is Molybdenum cofactor sulfurase of Drosophila yakuba (Fruit fly).